Reading from the N-terminus, the 741-residue chain is mRNA decapping complex subunit 2 (741 aa).

Residues 1-243 (MSFTNATFSQ…KKRNIANNTT (243 aa)) form an interaction with pdc1 region. Residues 94 to 227 (TRIPVRGAIM…KFYMVIPFLA (134 aa)) enclose the Nudix hydrolase domain. The Nudix box signature appears at 128-149 (GKIDKDESDVDCAIREVYEETG). The ATP site is built by Arg167 and Tyr220. Polar residues-rich tracts occupy residues 268–278 (TAPSDLATPQP) and 439–453 (YGSS…QTQQ). 5 disordered regions span residues 268–289 (TAPS…VESH), 425–453 (SVSS…QTQQ), 525–552 (TKKF…PNAN), 592–616 (GLPT…SQVK), and 654–721 (VSPQ…FKGS). Composition is skewed to basic and acidic residues over residues 606 to 616 (NNERKASSQVK), 681 to 690 (ENSETNKNHV), and 707 to 721 (DQKK…FKGS).

The protein belongs to the Nudix hydrolase family. DCP2 subfamily. As to quaternary structure, component of the decapping complex composed of dcp1 and dcp2. Interacts with edc3. Interacts with pdc1; via N-terminus. Interacts with pdc2. Mn(2+) is required as a cofactor.

Its subcellular location is the cytoplasm. It localises to the P-body. Its function is as follows. Catalytic component of the decapping complex necessary for the degradation of mRNAs, both in normal mRNA turnover and in nonsense-mediated mRNA decay. Removes the 7-methyl guanine cap structure from mRNA molecules, yielding a 5'-phosphorylated mRNA fragment and 7m-GDP. Decapping is the major pathway of mRNA degradation in yeast. It occurs through deadenylation, decapping and subsequent 5' to 3' exonucleolytic decay of the transcript body. The protein is mRNA decapping complex subunit 2 (dcp2) of Schizosaccharomyces pombe (strain 972 / ATCC 24843) (Fission yeast).